We begin with the raw amino-acid sequence, 271 residues long: Homeobox protein pal-1 (271 aa).

3 disordered regions span residues 1-25 (MSVD…TNVN), 100-135 (PPLS…ASSS), and 178-202 (GSAG…TNNV). Composition is skewed to low complexity over residues 100 to 117 (PPLS…YPSP) and 125 to 135 (STSSGIGASSS). The segment covering 189 to 202 (DTKSLPTGPGTNNV) has biased composition (polar residues). The segment at residues 207 to 266 (ADKYRMVYSDYQRLELEKEFHTSAFITSDRKSQLSTMLSLTERQIKIWFQNRRAKDRRDK) is a DNA-binding region (homeobox).

This sequence belongs to the Caudal homeobox family. Interacts with tir-1 and let-756.

The protein localises to the nucleus. It is found in the chromosome. Its subcellular location is the centromere. It localises to the kinetochore. Its function is as follows. Transcriptional activator. Interacts with promoter regions for tbx-8.9, tbx-9, elt-1, hnd-1, scrt-1, and vab-7 genes. Binds the sequence ATTTATGAC. Binds to the enhancer region of the hlh-1 gene promoter during embryonic body wall muscle development. Activates the gene for mab-5 in embryo development. Necessary for vab-7 expression in C blastomeres in the posterior of embryos. Required for posterior V6 neuroectoblast cell fate specification during postembryonic neurogenesis (patterning) which generates the characteristic ray lineage during male tail development. Binds to ced-3 promoter and activated expression which is crucial for tail-spike cell death. Has a role in E cell specification in endoderm development and body wall muscle development. This chain is Homeobox protein pal-1, found in Caenorhabditis briggsae.